Reading from the N-terminus, the 157-residue chain is 6,7-dimethyl-8-ribityllumazine synthase (157 aa).

5-amino-6-(D-ribitylamino)uracil is bound by residues Phe22, 56-58, and 80-82; these read AME and AVV. Position 85 to 86 (85 to 86) interacts with (2S)-2-hydroxy-3-oxobutyl phosphate; sequence ET. His88 (proton donor) is an active-site residue. 5-amino-6-(D-ribitylamino)uracil is bound at residue Phe113. Arg127 lines the (2S)-2-hydroxy-3-oxobutyl phosphate pocket.

Belongs to the DMRL synthase family.

It carries out the reaction (2S)-2-hydroxy-3-oxobutyl phosphate + 5-amino-6-(D-ribitylamino)uracil = 6,7-dimethyl-8-(1-D-ribityl)lumazine + phosphate + 2 H2O + H(+). The protein operates within cofactor biosynthesis; riboflavin biosynthesis; riboflavin from 2-hydroxy-3-oxobutyl phosphate and 5-amino-6-(D-ribitylamino)uracil: step 1/2. Catalyzes the formation of 6,7-dimethyl-8-ribityllumazine by condensation of 5-amino-6-(D-ribitylamino)uracil with 3,4-dihydroxy-2-butanone 4-phosphate. This is the penultimate step in the biosynthesis of riboflavin. The sequence is that of 6,7-dimethyl-8-ribityllumazine synthase from Levilactobacillus brevis (strain ATCC 367 / BCRC 12310 / CIP 105137 / JCM 1170 / LMG 11437 / NCIMB 947 / NCTC 947) (Lactobacillus brevis).